We begin with the raw amino-acid sequence, 174 residues long: Translation initiation factor IF-3 (174 aa).

It belongs to the IF-3 family. Monomer.

Its subcellular location is the cytoplasm. In terms of biological role, IF-3 binds to the 30S ribosomal subunit and shifts the equilibrium between 70S ribosomes and their 50S and 30S subunits in favor of the free subunits, thus enhancing the availability of 30S subunits on which protein synthesis initiation begins. This chain is Translation initiation factor IF-3, found in Azorhizobium caulinodans (strain ATCC 43989 / DSM 5975 / JCM 20966 / LMG 6465 / NBRC 14845 / NCIMB 13405 / ORS 571).